Reading from the N-terminus, the 371-residue chain is Chaperone protein DnaJ (371 aa).

A J domain is found at 5-69 (DYYEVLGLSK…QKRAQYDQFG (65 aa)). The CR-type zinc finger occupies 133-215 (GKELNVEIPV…CHGSGKVRKR (83 aa)). Residues C146, C149, C163, C166, C189, C192, C203, and C206 each contribute to the Zn(2+) site. CXXCXGXG motif repeat units follow at residues 146–153 (CDTCKGSG), 163–170 (CKHCSGSG), 189–196 (CSHCSGTG), and 203–210 (CTTCHGSG).

The protein belongs to the DnaJ family. Homodimer. The cofactor is Zn(2+).

The protein localises to the cytoplasm. In terms of biological role, participates actively in the response to hyperosmotic and heat shock by preventing the aggregation of stress-denatured proteins and by disaggregating proteins, also in an autonomous, DnaK-independent fashion. Unfolded proteins bind initially to DnaJ; upon interaction with the DnaJ-bound protein, DnaK hydrolyzes its bound ATP, resulting in the formation of a stable complex. GrpE releases ADP from DnaK; ATP binding to DnaK triggers the release of the substrate protein, thus completing the reaction cycle. Several rounds of ATP-dependent interactions between DnaJ, DnaK and GrpE are required for fully efficient folding. Also involved, together with DnaK and GrpE, in the DNA replication of plasmids through activation of initiation proteins. The sequence is that of Chaperone protein DnaJ from Bacillus cereus (strain 03BB102).